The following is a 388-amino-acid chain: Chorismate synthase (388 aa).

Arg39 and Arg45 together coordinate NADP(+). FMN contacts are provided by residues 130–132, 251–252, Gly296, 311–315, and Arg337; these read RSS, NA, and KPIPT.

This sequence belongs to the chorismate synthase family. As to quaternary structure, homotetramer. Requires FMNH2 as cofactor.

It catalyses the reaction 5-O-(1-carboxyvinyl)-3-phosphoshikimate = chorismate + phosphate. Its pathway is metabolic intermediate biosynthesis; chorismate biosynthesis; chorismate from D-erythrose 4-phosphate and phosphoenolpyruvate: step 7/7. Functionally, catalyzes the anti-1,4-elimination of the C-3 phosphate and the C-6 proR hydrogen from 5-enolpyruvylshikimate-3-phosphate (EPSP) to yield chorismate, which is the branch point compound that serves as the starting substrate for the three terminal pathways of aromatic amino acid biosynthesis. This reaction introduces a second double bond into the aromatic ring system. The protein is Chorismate synthase of Streptococcus pyogenes serotype M28 (strain MGAS6180).